Consider the following 95-residue polypeptide: Putative defensin-like protein 262 (95 aa).

The first 26 residues, 1–26, serve as a signal peptide directing secretion; sequence MEKTSLKLIFLFSLTVIAFCSSLGDA. 4 disulfide bridges follow: Cys-48–Cys-95, Cys-64–Cys-83, Cys-70–Cys-91, and Cys-74–Cys-93.

Belongs to the DEFL family.

It localises to the secreted. This is Putative defensin-like protein 262 from Arabidopsis thaliana (Mouse-ear cress).